The chain runs to 422 residues: UDP-N-acetylglucosamine 1-carboxyvinyltransferase (422 aa).

Residue 22–23 (KN) coordinates phosphoenolpyruvate. Arg92 is a binding site for UDP-N-acetyl-alpha-D-glucosamine. The active-site Proton donor is Cys116. At Cys116 the chain carries 2-(S-cysteinyl)pyruvic acid O-phosphothioketal. UDP-N-acetyl-alpha-D-glucosamine is bound by residues Asp306 and Ile328.

It belongs to the EPSP synthase family. MurA subfamily.

It is found in the cytoplasm. The catalysed reaction is phosphoenolpyruvate + UDP-N-acetyl-alpha-D-glucosamine = UDP-N-acetyl-3-O-(1-carboxyvinyl)-alpha-D-glucosamine + phosphate. It participates in cell wall biogenesis; peptidoglycan biosynthesis. In terms of biological role, cell wall formation. Adds enolpyruvyl to UDP-N-acetylglucosamine. This is UDP-N-acetylglucosamine 1-carboxyvinyltransferase from Elusimicrobium minutum (strain Pei191).